The sequence spans 396 residues: Tryptophan synthase beta chain (396 aa).

Residue lysine 86 is modified to N6-(pyridoxal phosphate)lysine.

The protein belongs to the TrpB family. As to quaternary structure, tetramer of two alpha and two beta chains. Pyridoxal 5'-phosphate is required as a cofactor.

It catalyses the reaction (1S,2R)-1-C-(indol-3-yl)glycerol 3-phosphate + L-serine = D-glyceraldehyde 3-phosphate + L-tryptophan + H2O. The protein operates within amino-acid biosynthesis; L-tryptophan biosynthesis; L-tryptophan from chorismate: step 5/5. In terms of biological role, the beta subunit is responsible for the synthesis of L-tryptophan from indole and L-serine. The polypeptide is Tryptophan synthase beta chain (Francisella tularensis subsp. novicida (strain U112)).